Consider the following 54-residue polypeptide: UPF0391 membrane protein Sde_0270 (54 aa).

The next 2 helical transmembrane spans lie at 6 to 26 and 29 to 49; these read IVFL…IAGV and GIAK…LVIG.

It belongs to the UPF0391 family.

It localises to the cell membrane. In Saccharophagus degradans (strain 2-40 / ATCC 43961 / DSM 17024), this protein is UPF0391 membrane protein Sde_0270.